Here is a 116-residue protein sequence, read N- to C-terminus: Large ribosomal subunit protein bL17 (116 aa).

This sequence belongs to the bacterial ribosomal protein bL17 family. Part of the 50S ribosomal subunit. Contacts protein L32.

This chain is Large ribosomal subunit protein bL17, found in Parasynechococcus marenigrum (strain WH8102).